The primary structure comprises 133 residues: Small ribosomal subunit protein uS8 (133 aa).

This sequence belongs to the universal ribosomal protein uS8 family. As to quaternary structure, part of the 30S ribosomal subunit. Contacts proteins S5 and S12.

Functionally, one of the primary rRNA binding proteins, it binds directly to 16S rRNA central domain where it helps coordinate assembly of the platform of the 30S subunit. The sequence is that of Small ribosomal subunit protein uS8 from Leptospira borgpetersenii serovar Hardjo-bovis (strain JB197).